The following is a 261-amino-acid chain: Antiviral protein S (261 aa).

2 disulfide bridges follow: C34/C258 and C84/C105. Residue E175 is part of the active site.

This sequence belongs to the ribosome-inactivating protein family. Type 1 RIP subfamily.

It carries out the reaction Endohydrolysis of the N-glycosidic bond at one specific adenosine on the 28S rRNA.. Its function is as follows. Inhibits viral infection of plants, and protein synthesis in vitro. The polypeptide is Antiviral protein S (Phytolacca americana (American pokeweed)).